We begin with the raw amino-acid sequence, 413 residues long: Putative tRNA pseudouridine synthase C16C4.06c (413 aa).

Residue aspartate 96 is the Nucleophile of the active site. Substrate is bound at residue tyrosine 154.

This sequence belongs to the tRNA pseudouridine synthase TruA family.

The protein resides in the cytoplasm. It is found in the nucleus. The enzyme catalyses a uridine in tRNA = a pseudouridine in tRNA. This is Putative tRNA pseudouridine synthase C16C4.06c from Schizosaccharomyces pombe (strain 972 / ATCC 24843) (Fission yeast).